A 278-amino-acid polypeptide reads, in one-letter code: 3-methyl-2-oxobutanoate hydroxymethyltransferase (278 aa).

Mg(2+) is bound by residues Asp-43 and Asp-82. Residues 43–44 (DS), Asp-82, and Lys-112 contribute to the 3-methyl-2-oxobutanoate site. Residue Glu-114 coordinates Mg(2+). The active-site Proton acceptor is the Glu-181.

It belongs to the PanB family. In terms of assembly, homodecamer; pentamer of dimers. It depends on Mg(2+) as a cofactor.

The protein localises to the cytoplasm. The enzyme catalyses 3-methyl-2-oxobutanoate + (6R)-5,10-methylene-5,6,7,8-tetrahydrofolate + H2O = 2-dehydropantoate + (6S)-5,6,7,8-tetrahydrofolate. It functions in the pathway cofactor biosynthesis; (R)-pantothenate biosynthesis; (R)-pantoate from 3-methyl-2-oxobutanoate: step 1/2. Its function is as follows. Catalyzes the reversible reaction in which hydroxymethyl group from 5,10-methylenetetrahydrofolate is transferred onto alpha-ketoisovalerate to form ketopantoate. The chain is 3-methyl-2-oxobutanoate hydroxymethyltransferase from Bacillus cereus (strain B4264).